Reading from the N-terminus, the 146-residue chain is MNIMPVSESLMADWLGLRKLLWPDHDEAHLQEMQRLLQQTQSLQLLAYSDTQQAIAMLEASIRYEYVNGTQTSPVAFLEGIYVLPDYRRSGIATHLVQQVEAWAKPFGCIEFASDAALDNRISHAMHQALGFHETERVVYFKKHIG.

Positions 1–146 (MNIMPVSESL…RVVYFKKHIG (146 aa)) constitute an N-acetyltransferase domain. Positions 22, 25, 66, and 79 each coordinate substrate. An acetyl-CoA-binding site is contributed by 81–83 (IYV). Residue Asp115 coordinates substrate. Asn120 serves as a coordination point for acetyl-CoA. Glu136 is a substrate binding site.

As to quaternary structure, homodimer.

The catalysed reaction is kanamycin B + acetyl-CoA = N(6')-acetylkanamycin B + CoA + H(+). In terms of biological role, catalyzes the transfer of an acetyl group from acetyl-CoA to the 6'-amino group of aminoglycoside molecules conferring resistance to antibiotics containing the purpurosamine ring including amikacin, kanamycin, tobramycin and netilmicin. This chain is Aminoglycoside N(6')-acetyltransferase type 1, found in Acinetobacter genomosp. 13.